Reading from the N-terminus, the 390-residue chain is 1-deoxy-D-xylulose 5-phosphate reductoisomerase (390 aa).

The NADPH site is built by Thr10, Gly11, Ser12, Val13, and Asn124. A 1-deoxy-D-xylulose 5-phosphate-binding site is contributed by Lys125. An NADPH-binding site is contributed by Glu126. Asp150 serves as a coordination point for Mn(2+). Positions 151, 152, 181, and 204 each coordinate 1-deoxy-D-xylulose 5-phosphate. Glu152 lines the Mn(2+) pocket. Gly210 lines the NADPH pocket. The 1-deoxy-D-xylulose 5-phosphate site is built by Ser217, Asn222, Lys223, and Glu226. A Mn(2+)-binding site is contributed by Glu226.

The protein belongs to the DXR family. It depends on Mg(2+) as a cofactor. The cofactor is Mn(2+).

The enzyme catalyses 2-C-methyl-D-erythritol 4-phosphate + NADP(+) = 1-deoxy-D-xylulose 5-phosphate + NADPH + H(+). It participates in isoprenoid biosynthesis; isopentenyl diphosphate biosynthesis via DXP pathway; isopentenyl diphosphate from 1-deoxy-D-xylulose 5-phosphate: step 1/6. In terms of biological role, catalyzes the NADPH-dependent rearrangement and reduction of 1-deoxy-D-xylulose-5-phosphate (DXP) to 2-C-methyl-D-erythritol 4-phosphate (MEP). This Janthinobacterium sp. (strain Marseille) (Minibacterium massiliensis) protein is 1-deoxy-D-xylulose 5-phosphate reductoisomerase.